Consider the following 310-residue polypeptide: GPN-loop GTPase 2 (310 aa).

Ala2 carries the post-translational modification N-acetylalanine. GTP is bound at residue Gly19 to Thr24. The Gly-Pro-Asn (GPN)-loop; involved in dimer interface motif lies at Gly76–Asn78. Residue Ser178–Asp181 participates in GTP binding.

Belongs to the GPN-loop GTPase family. As to quaternary structure, heterodimers with GPN1 or GPN3. Binds to RNA polymerase II (RNAPII).

Small GTPase required for proper localization of RNA polymerase II and III (RNAPII and RNAPIII). May act at an RNAP assembly step prior to nuclear import. The polypeptide is GPN-loop GTPase 2 (Homo sapiens (Human)).